The following is a 553-amino-acid chain: Methionine--tRNA ligase (553 aa).

The short motif at 12–22 (PYANSQLHLGH) is the 'HIGH' region element. Positions 144, 147, 157, and 160 each coordinate Zn(2+). The 'KMSKS' region motif lies at 332 to 336 (KFSKS). Lysine 335 serves as a coordination point for ATP.

The protein belongs to the class-I aminoacyl-tRNA synthetase family. MetG type 1 subfamily. Monomer. Requires Zn(2+) as cofactor.

The protein localises to the cytoplasm. It catalyses the reaction tRNA(Met) + L-methionine + ATP = L-methionyl-tRNA(Met) + AMP + diphosphate. Functionally, is required not only for elongation of protein synthesis but also for the initiation of all mRNA translation through initiator tRNA(fMet) aminoacylation. In Dehalococcoides mccartyi (strain CBDB1), this protein is Methionine--tRNA ligase.